Reading from the N-terminus, the 124-residue chain is Small ribosomal subunit protein uS12 (124 aa).

Position 89 is a 3-methylthioaspartic acid (Asp-89).

This sequence belongs to the universal ribosomal protein uS12 family. As to quaternary structure, part of the 30S ribosomal subunit. Contacts proteins S8 and S17. May interact with IF1 in the 30S initiation complex.

With S4 and S5 plays an important role in translational accuracy. Functionally, interacts with and stabilizes bases of the 16S rRNA that are involved in tRNA selection in the A site and with the mRNA backbone. Located at the interface of the 30S and 50S subunits, it traverses the body of the 30S subunit contacting proteins on the other side and probably holding the rRNA structure together. The combined cluster of proteins S8, S12 and S17 appears to hold together the shoulder and platform of the 30S subunit. The chain is Small ribosomal subunit protein uS12 from Baumannia cicadellinicola subsp. Homalodisca coagulata.